We begin with the raw amino-acid sequence, 68 residues long: Neuronal regeneration-related protein (68 aa).

Residues 22–54 (EGRLPKGRLPVPKEVNRKKNDETNAASLTPLGS) form a disordered region. Residues 44-54 (TNAASLTPLGS) show a composition bias toward polar residues. Phosphoserine is present on S59.

In terms of assembly, interacts with the latency-associated peptides (LAP) of TGFB1 and TGFB2; the interaction results in a decrease in TGFB autoinduction. Interacts with FLNA. In terms of processing, phosphorylated on Ser-59. Phosphorylation decreases stability and activity. Expressed in lung (at protein level).

It localises to the cytoplasm. May have roles in neural function. Ectopic expression augments motility of gliomas. Also promotes axonal regeneration. May also have functions in cellular differentiation. Induces differentiation of fibroblast into myofibroblast and myofibroblast ameboid migration. Increases retinoic-acid regulation of lipid-droplet biogenesis. Down-regulates the expression of TGFB1 and TGFB2 but not of TGFB3. May play a role in the regulation of alveolar generation. The sequence is that of Neuronal regeneration-related protein (NREP) from Homo sapiens (Human).